The following is a 459-amino-acid chain: UDP-glycosyltransferase 78D3 (459 aa).

Residues 338–340, 355–363, and 377–380 each bind UDP-alpha-D-glucose; these read APQ, HGGWNSVLE, and FGDH.

It belongs to the UDP-glycosyltransferase family.

Functionally, possesses low quercetin 3-O-glucosyltransferase activity in vitro. This chain is UDP-glycosyltransferase 78D3 (UGT78D3), found in Arabidopsis thaliana (Mouse-ear cress).